A 1328-amino-acid chain; its full sequence is Protein turtle homolog B (1328 aa).

Positions 1-17 (MIWYVATLIASVISTRG) are cleaved as a signal peptide. Residues 18–722 (LVAQGAHGLR…DLTDDGLARP (705 aa)) lie on the Extracellular side of the membrane. 5 Ig-like domains span residues 30 to 115 (PEFV…ECKV), 139 to 226 (PTFT…LLVQ), 228 to 320 (PPFI…AYLT), 324 to 415 (PARV…ARLV), and 420 to 504 (PYFT…THLT). 2 disulfides stabilise this stretch: Cys45–Cys113 and Cys161–Cys208. Asn241 and Asn258 each carry an N-linked (GlcNAc...) asparagine glycan. Disulfide bonds link Cys250-Cys303, Cys346-Cys397, and Cys442-Cys488. Fibronectin type-III domains lie at 512–604 (APGS…TLAF) and 614–708 (LVTP…STDI). N-linked (GlcNAc...) asparagine glycosylation is present at Asn624. The chain crosses the membrane as a helical span at residues 723 to 743 (VLAGIVATICFLAAAILFSTL). Residues 744-1328 (AACFVNKQRK…EPPTTLPTSG (585 aa)) lie on the Cytoplasmic side of the membrane. 3 disordered regions span residues 758–817 (RKKD…EKEL), 914–1040 (PMSS…PEPW), and 1106–1328 (KSPG…PTSG). A phosphoserine mark is found at Ser775, Ser783, and Ser794. Positions 990 to 1001 (SPLSSVMSSPPL) are enriched in low complexity. 3 stretches are compositionally biased toward polar residues: residues 1018–1033 (ENASNSTLPLTQTPTG), 1129–1141 (LVSQGQLRHTSQG), and 1199–1214 (SRLSPLTQSPLSSRTG). At Arg1136 the chain carries Omega-N-methylarginine. A phosphoserine mark is found at Ser1207 and Ser1215. A compositionally biased stretch (low complexity) spans 1246–1273 (SFSRKSTPSSTGSPSQSSRSGSPSYRPT). Composition is skewed to pro residues over residues 1284 to 1295 (PSPPPGPAPPAP) and 1318 to 1328 (PEPPTTLPTSG).

This sequence belongs to the immunoglobulin superfamily. Turtle family. As to quaternary structure, found in a complex with MAGI2 and NLGN2, where it interacts with MAGI2 (via PDZ 5 and PDZ 6 domains). Post-translationally, N-glycosylated and sialylated. Not significantly O-glycosylated. Detected in brain.

The protein resides in the cell membrane. Its subcellular location is the postsynaptic cell membrane. It localises to the postsynaptic density. In terms of biological role, transmembrane protein which is abundantly expressed in interneurons, where it may regulate inhibitory synapse development. May mediate homophilic cell adhesion. The sequence is that of Protein turtle homolog B from Mus musculus (Mouse).